The primary structure comprises 258 residues: Imidazole glycerol phosphate synthase subunit HisF (258 aa).

Catalysis depends on residues Asp-11 and Asp-130.

This sequence belongs to the HisA/HisF family. Heterodimer of HisH and HisF.

The protein resides in the cytoplasm. The enzyme catalyses 5-[(5-phospho-1-deoxy-D-ribulos-1-ylimino)methylamino]-1-(5-phospho-beta-D-ribosyl)imidazole-4-carboxamide + L-glutamine = D-erythro-1-(imidazol-4-yl)glycerol 3-phosphate + 5-amino-1-(5-phospho-beta-D-ribosyl)imidazole-4-carboxamide + L-glutamate + H(+). Its pathway is amino-acid biosynthesis; L-histidine biosynthesis; L-histidine from 5-phospho-alpha-D-ribose 1-diphosphate: step 5/9. Functionally, IGPS catalyzes the conversion of PRFAR and glutamine to IGP, AICAR and glutamate. The HisF subunit catalyzes the cyclization activity that produces IGP and AICAR from PRFAR using the ammonia provided by the HisH subunit. In Escherichia fergusonii (strain ATCC 35469 / DSM 13698 / CCUG 18766 / IAM 14443 / JCM 21226 / LMG 7866 / NBRC 102419 / NCTC 12128 / CDC 0568-73), this protein is Imidazole glycerol phosphate synthase subunit HisF.